Reading from the N-terminus, the 465-residue chain is Glutamate--tRNA ligase (465 aa).

Positions 11–21 match the 'HIGH' region motif; sequence PSPTGFIHLGN. The short motif at 243 to 247 is the 'KMSKS' region element; sequence KMSKR. K246 provides a ligand contact to ATP.

Belongs to the class-I aminoacyl-tRNA synthetase family. Glutamate--tRNA ligase type 1 subfamily. Monomer.

The protein localises to the cytoplasm. It carries out the reaction tRNA(Glu) + L-glutamate + ATP = L-glutamyl-tRNA(Glu) + AMP + diphosphate. Catalyzes the attachment of glutamate to tRNA(Glu) in a two-step reaction: glutamate is first activated by ATP to form Glu-AMP and then transferred to the acceptor end of tRNA(Glu). In Cupriavidus metallidurans (strain ATCC 43123 / DSM 2839 / NBRC 102507 / CH34) (Ralstonia metallidurans), this protein is Glutamate--tRNA ligase.